Here is a 425-residue protein sequence, read N- to C-terminus: Dihydroorotase (425 aa).

The Zn(2+) site is built by histidine 59 and histidine 61. Residues 61-63 (HLR) and asparagine 93 each bind substrate. The Zn(2+) site is built by aspartate 151, histidine 178, and histidine 231. Substrate is bound at residue asparagine 277. Residue aspartate 304 coordinates Zn(2+). Aspartate 304 is a catalytic residue. Substrate contacts are provided by residues histidine 308 and 322–323 (FG).

The protein belongs to the metallo-dependent hydrolases superfamily. DHOase family. Class I DHOase subfamily. The cofactor is Zn(2+).

It catalyses the reaction (S)-dihydroorotate + H2O = N-carbamoyl-L-aspartate + H(+). It functions in the pathway pyrimidine metabolism; UMP biosynthesis via de novo pathway; (S)-dihydroorotate from bicarbonate: step 3/3. Functionally, catalyzes the reversible cyclization of carbamoyl aspartate to dihydroorotate. The chain is Dihydroorotase from Staphylococcus epidermidis (strain ATCC 12228 / FDA PCI 1200).